Consider the following 238-residue polypeptide: Phosphoribosylaminoimidazole-succinocarboxamide synthase (238 aa).

It belongs to the SAICAR synthetase family.

The enzyme catalyses 5-amino-1-(5-phospho-D-ribosyl)imidazole-4-carboxylate + L-aspartate + ATP = (2S)-2-[5-amino-1-(5-phospho-beta-D-ribosyl)imidazole-4-carboxamido]succinate + ADP + phosphate + 2 H(+). Its pathway is purine metabolism; IMP biosynthesis via de novo pathway; 5-amino-1-(5-phospho-D-ribosyl)imidazole-4-carboxamide from 5-amino-1-(5-phospho-D-ribosyl)imidazole-4-carboxylate: step 1/2. The polypeptide is Phosphoribosylaminoimidazole-succinocarboxamide synthase (Persephonella marina (strain DSM 14350 / EX-H1)).